Consider the following 463-residue polypeptide: Putative dipeptidase YtjP (463 aa).

Position 85 (histidine 85) interacts with Zn(2+). Aspartate 87 is an active-site residue. Position 116 (aspartate 116) interacts with Zn(2+). Catalysis depends on glutamate 150, which acts as the Proton acceptor. Zn(2+) is bound by residues glutamate 151, aspartate 174, and histidine 436.

The protein belongs to the peptidase M20A family. Zn(2+) serves as cofactor.

The protein is Putative dipeptidase YtjP (ytjP) of Bacillus subtilis (strain 168).